We begin with the raw amino-acid sequence, 421 residues long: Protein ECERIFERUM 2 (421 aa).

Met1 carries the N-acetylmethionine modification.

This sequence belongs to the plant acyltransferase family. Expressed at high levels in the epidermis of stems and young siliques. Expressed in flowers.

The protein resides in the endoplasmic reticulum. Its subcellular location is the nucleus. Its function is as follows. Involved in biosynthesis of the epicuticular wax. Plays a role in very-long-chain fatty acid (VLCFA) biosynthesis and is required for C28 fatty acid elongation in stem. Despite its classification as a BAHD acyltransferase based on sequence homology, CER2 does not seem to share the catalytic mechanism of the members of the BAHD family. In Arabidopsis thaliana (Mouse-ear cress), this protein is Protein ECERIFERUM 2 (CER2).